Reading from the N-terminus, the 264-residue chain is Thymidylate synthase (264 aa).

Arg-21 contacts dUMP. His-51 is a binding site for (6R)-5,10-methylene-5,6,7,8-tetrahydrofolate. Residue 126–127 (RR) coordinates dUMP. The Nucleophile role is filled by Cys-146. Residues 166–169 (RSAD), Asn-177, and 207–209 (HLY) each bind dUMP. Asp-169 serves as a coordination point for (6R)-5,10-methylene-5,6,7,8-tetrahydrofolate. A (6R)-5,10-methylene-5,6,7,8-tetrahydrofolate-binding site is contributed by Ala-263.

This sequence belongs to the thymidylate synthase family. Bacterial-type ThyA subfamily. Homodimer.

It is found in the cytoplasm. It carries out the reaction dUMP + (6R)-5,10-methylene-5,6,7,8-tetrahydrofolate = 7,8-dihydrofolate + dTMP. The protein operates within pyrimidine metabolism; dTTP biosynthesis. Its function is as follows. Catalyzes the reductive methylation of 2'-deoxyuridine-5'-monophosphate (dUMP) to 2'-deoxythymidine-5'-monophosphate (dTMP) while utilizing 5,10-methylenetetrahydrofolate (mTHF) as the methyl donor and reductant in the reaction, yielding dihydrofolate (DHF) as a by-product. This enzymatic reaction provides an intracellular de novo source of dTMP, an essential precursor for DNA biosynthesis. The sequence is that of Thymidylate synthase from Bdellovibrio bacteriovorus (strain ATCC 15356 / DSM 50701 / NCIMB 9529 / HD100).